The following is a 180-amino-acid chain: Dephospho-CoA kinase (180 aa).

Residues 2–180 (VIGVTGKIGT…VMKLVWEKRE (179 aa)) form the DPCK domain. 10-15 (GTGKST) serves as a coordination point for ATP.

Belongs to the CoaE family.

The protein resides in the cytoplasm. The enzyme catalyses 3'-dephospho-CoA + ATP = ADP + CoA + H(+). Its pathway is cofactor biosynthesis; coenzyme A biosynthesis; CoA from (R)-pantothenate: step 5/5. In terms of biological role, catalyzes the phosphorylation of the 3'-hydroxyl group of dephosphocoenzyme A to form coenzyme A. The sequence is that of Dephospho-CoA kinase from Thermotoga maritima (strain ATCC 43589 / DSM 3109 / JCM 10099 / NBRC 100826 / MSB8).